A 357-amino-acid chain; its full sequence is Transcription factor HHO1 (357 aa).

2 disordered regions span residues 94–117 (TSIE…ETDI) and 171–198 (NNNI…RKNR). Residues 96-109 (IEEEVDDKDDDDEE) show a composition bias toward acidic residues. Residues 171–182 (NNNIKSPVTTSD) are compositionally biased toward polar residues. The HTH myb-type domain maps to 193 to 253 (GQRKNRRCWS…HLQKYRLHAR (61 aa)). Residues 224–249 (PKQIRDIMKVDGLTNDEVKSHLQKYR) constitute a DNA-binding region (H-T-H motif).

It is found in the nucleus. In terms of biological role, probable factor involved in nitrate and phosphate signaling in roots. Integrates nitrate and phosphate starvation responses and adaptation of root architecture, depending on nutrient availabilities. Acts downstream of the nitrate sensor and transporter NPF6.3/NRT1.1. Represses primary root development in response to phosphate deficiency conditions, only when nitrate is present. In Arabidopsis thaliana (Mouse-ear cress), this protein is Transcription factor HHO1.